Consider the following 223-residue polypeptide: Endonuclease NucS (223 aa).

It belongs to the NucS endonuclease family.

The protein resides in the cytoplasm. Its function is as follows. Cleaves both 3' and 5' ssDNA extremities of branched DNA structures. This is Endonuclease NucS from Mycolicibacterium vanbaalenii (strain DSM 7251 / JCM 13017 / BCRC 16820 / KCTC 9966 / NRRL B-24157 / PYR-1) (Mycobacterium vanbaalenii).